The primary structure comprises 279 residues: DegV domain-containing protein SP_1112 (279 aa).

Positions 4 to 277 (IKIVTDSSVT…ENAWAILIRY (274 aa)) constitute a DegV domain. Thr-62 and Ser-94 together coordinate hexadecanoate.

Its function is as follows. May bind long-chain fatty acids, such as palmitate, and may play a role in lipid transport or fatty acid metabolism. This is DegV domain-containing protein SP_1112 from Streptococcus pneumoniae serotype 4 (strain ATCC BAA-334 / TIGR4).